We begin with the raw amino-acid sequence, 140 residues long: uncharacterized protein (140 aa).

An N-linked (GlcNAc...) asparagine; by host glycan is attached at Asn-86. Residues 92 to 112 (IFNGLGFILIVIFIYLLLITL) traverse the membrane as a helical segment.

The protein belongs to the asfivirus B117L family.

It localises to the host membrane. The protein localises to the virion. This is an uncharacterized protein from African swine fever virus (isolate Pig/Kenya/KEN-50/1950) (ASFV).